The following is a 119-amino-acid chain: Large ribosomal subunit protein bL20 (119 aa).

This sequence belongs to the bacterial ribosomal protein bL20 family.

Functionally, binds directly to 23S ribosomal RNA and is necessary for the in vitro assembly process of the 50S ribosomal subunit. It is not involved in the protein synthesizing functions of that subunit. The chain is Large ribosomal subunit protein bL20 from Clostridium perfringens (strain ATCC 13124 / DSM 756 / JCM 1290 / NCIMB 6125 / NCTC 8237 / Type A).